Reading from the N-terminus, the 360-residue chain is Olfactory receptor 1L1 (360 aa).

Over M1–K75 the chain is Extracellular. Residue N55 is glycosylated (N-linked (GlcNAc...) asparagine). The helical transmembrane segment at P76–I99 threads the bilayer. The Cytoplasmic segment spans residues R100–T107. Residues P108–P129 traverse the membrane as a helical segment. Residues K130–Q150 are Extracellular-facing. C147 and C239 are oxidised to a cystine. The chain crosses the membrane as a helical span at residues M151–I170. The Cytoplasmic portion of the chain corresponds to D171–R189. A helical transmembrane segment spans residues C190 to L208. The Extracellular portion of the chain corresponds to H209 to E246. A helical transmembrane segment spans residues I247–L269. Topologically, residues R270–K286 are cytoplasmic. The helical transmembrane segment at A287 to Y309 threads the bilayer. The Extracellular portion of the chain corresponds to F310–Q321. An N-linked (GlcNAc...) asparagine glycan is attached at N315. Residues I322–L341 form a helical membrane-spanning segment. Residues R342–Q360 are Cytoplasmic-facing.

The protein belongs to the G-protein coupled receptor 1 family.

It is found in the cell membrane. In terms of biological role, odorant receptor. This Homo sapiens (Human) protein is Olfactory receptor 1L1 (OR1L1).